Here is a 225-residue protein sequence, read N- to C-terminus: MNGYFFSFEGPEGAGKTTMIGKLESFLRERGFDVMVTREPGGVRIAEAIRALILNREYTEMDGRTEALLYAAARRQHLLEKIVPALEAGRVVLCDRFVDSSLAYQGFARGLGVEEVWKINEFAIDGYMPSLTVYFDIDPQIGLERIRQNREREVNRLDLETLSFHDKVREGYRKLAKRFAERIVVIDASRPLDDVFSETVATVLSRLEGSKRHFHESNRDDSCWT.

10–17 provides a ligand contact to ATP; the sequence is GPEGAGKT.

It belongs to the thymidylate kinase family.

The catalysed reaction is dTMP + ATP = dTDP + ADP. Its function is as follows. Phosphorylation of dTMP to form dTDP in both de novo and salvage pathways of dTTP synthesis. This Geobacillus thermodenitrificans (strain NG80-2) protein is Thymidylate kinase.